An 891-amino-acid chain; its full sequence is DNA mismatch repair protein MutS (891 aa).

639–646 lines the ATP pocket; that stretch reads GPNMAGKS. Positions 827-854 are disordered; that stretch reads TIQEARPSAQGSEEKTPSSPAEKGLSLF.

This sequence belongs to the DNA mismatch repair MutS family.

Functionally, this protein is involved in the repair of mismatches in DNA. It is possible that it carries out the mismatch recognition step. This protein has a weak ATPase activity. This chain is DNA mismatch repair protein MutS, found in Treponema denticola (strain ATCC 35405 / DSM 14222 / CIP 103919 / JCM 8153 / KCTC 15104).